The primary structure comprises 805 residues: MWGRFLAPEASGRDSPGGARSFPAGPDYSSAWLPANESLWQATTVPSNHRNNHIRRHSIASDSGDTGIGTSCSDSVEDHSTSSGTLSFKPSQSLITLPTAHVMPSNSSASISKLRESLTPDGSKWSTSLMQTLGNHSRGEQDSSLDMKDFRPLRKWSSLSKLTAPDNCGQGGTVCREESRNGLEKIGKAKALTSQLRTIGPSCLHDSMEMLRLEDKEINKKRSSTLDCKYKFESCSKEDFRASSSTLRRQPVDMTYSALPESKPIMTSSEAFEPPKYLMLGQQAVGGVPIQPSVRTQMWLTEQLRTNPLEGRNTEDSYSLAPWQQQQIEDFRQGSETPMQVLTGSSRQSYSPGYQDFSKWESMLKIKEGLLRQKEIVIDRQKQQITHLHERIRDNELRAQHAMLGHYVNCEDSYVASLQPQYENTSLQTPFSEESVSHSQQGEFEQKLASTEKEVLQLNEFLKQRLSLFSEEKKKLEEKLKTRDRYISSLKKKCQKESEQNKEKQRRIETLEKYLADLPTLDDVQSQSLQLQILEEKNKNLQEALIDTEKKLEEIKKQCQDKETQLICQKKKEKELVTTVQSLQQKVERCLEDGIRLPMLDAKQLQNENDNLRQQNETASKIIDSQQDEIDRMILEIQSMQGKLSKEKLTTQKMMEELEKKERNVQRLTKALLENQRQTDETCSLLDQGQEPDQSRQQTVLSKRPLFDLTVIDQLFKEMSCCLFDLKALCSILNQRAQGKEPNLSLLLGIRSMNCSAEETENDHSTETLTKKLSDVCQLRRDIDELRTTISDRYAQDMGDNCITQ.

2 disordered regions span residues 1 to 27 (MWGR…AGPD) and 50 to 89 (RNNH…LSFK). The residue at position 15 (serine 15) is a Phosphoserine. A compositionally biased stretch (polar residues) spans 60–74 (ASDSGDTGIGTSCSD). Serine 207 bears the Phosphoserine mark. Residues 439 to 682 (SQQGEFEQKL…LENQRQTDET (244 aa)) are a coiled coil.

This sequence belongs to the CEP85 family. Isoform 1 and isoform 4 are expressed in spleen, lymph, thymus, tonsil and peripheral blood leukocytes, with isoform 1 expressed at higher levels. Isoform 4 is detected in K-562 leukemia cells and in the blood of precursor T lymphoblastic lymphoma (T-ALL) patients.

It localises to the cytoplasm. The protein resides in the cytoskeleton. It is found in the microtubule organizing center. Its subcellular location is the centrosome. Plays an essential role in neuronal cell migration. The sequence is that of Centrosomal protein of 85 kDa-like from Homo sapiens (Human).